The following is a 95-amino-acid chain: Progonadoliberin-1 (95 aa).

The first 25 residues, 1–25 (MAPQTSNLWILLLLVVVMMMSQGCC), serve as a signal peptide directing secretion. Residue Gln-26 is modified to Pyrrolidone carboxylic acid. Residue Gly-35 is modified to Glycine amide.

It belongs to the GnRH family.

It is found in the secreted. Functionally, stimulates the secretion of gonadotropins. The protein is Progonadoliberin-1 (gnrh1) of Sparus aurata (Gilthead sea bream).